The sequence spans 68 residues: Large ribosomal subunit protein bL33c (68 aa).

Belongs to the bacterial ribosomal protein bL33 family.

The protein resides in the plastid. Its subcellular location is the chloroplast. The chain is Large ribosomal subunit protein bL33c from Amborella trichopoda.